A 467-amino-acid polypeptide reads, in one-letter code: Cysteine protease ATG4a (467 aa).

The segment at 1–35 is disordered; sequence MKALCDRFVPQQCSSSSKSDTHDKSPLVSDSGPSD. Cysteine 170 serves as the catalytic Nucleophile. Active-site residues include aspartate 364 and histidine 366. A disordered region spans residues 448–467; that stretch reads NYGFADDDSEDEREDDWQML. Residues 452–467 show a composition bias toward acidic residues; the sequence is ADDDSEDEREDDWQML.

This sequence belongs to the peptidase C54 family. Interacts with ATG8. As to expression, constitutively expressed.

The protein localises to the cytoplasm. The catalysed reaction is [protein]-C-terminal L-amino acid-glycyl-phosphatidylethanolamide + H2O = [protein]-C-terminal L-amino acid-glycine + a 1,2-diacyl-sn-glycero-3-phosphoethanolamine. Cysteine protease that plays a key role in autophagy by mediating both proteolytic activation and delipidation of ATG8 family proteins. The protease activity is required for proteolytic activation of ATG8 family proteins: cleaves the C-terminal amino acid of ATG8 proteins to reveal a C-terminal glycine. Exposure of the glycine at the C-terminus is essential for ATG8 proteins conjugation to phosphatidylethanolamine (PE) and insertion to membranes, which is necessary for autophagy. In addition to the protease activity, also mediates delipidation of PE-conjugated ATG8 proteins. The sequence is that of Cysteine protease ATG4a from Arabidopsis thaliana (Mouse-ear cress).